A 270-amino-acid polypeptide reads, in one-letter code: Thymidylate synthase (270 aa).

Residues Arg-28 and 133–134 contribute to the dUMP site; that span reads RR. Cys-153 acts as the Nucleophile in catalysis. Residues 173-176, Asn-184, and 214-216 contribute to the dUMP site; these read RSAD and HIY. Asp-176 lines the (6R)-5,10-methylene-5,6,7,8-tetrahydrofolate pocket. (6R)-5,10-methylene-5,6,7,8-tetrahydrofolate is bound at residue Ala-269.

The protein belongs to the thymidylate synthase family. Bacterial-type ThyA subfamily. Homodimer.

It localises to the cytoplasm. It carries out the reaction dUMP + (6R)-5,10-methylene-5,6,7,8-tetrahydrofolate = 7,8-dihydrofolate + dTMP. The protein operates within pyrimidine metabolism; dTTP biosynthesis. Its function is as follows. Catalyzes the reductive methylation of 2'-deoxyuridine-5'-monophosphate (dUMP) to 2'-deoxythymidine-5'-monophosphate (dTMP) while utilizing 5,10-methylenetetrahydrofolate (mTHF) as the methyl donor and reductant in the reaction, yielding dihydrofolate (DHF) as a by-product. This enzymatic reaction provides an intracellular de novo source of dTMP, an essential precursor for DNA biosynthesis. This is Thymidylate synthase from Corynebacterium diphtheriae (strain ATCC 700971 / NCTC 13129 / Biotype gravis).